A 913-amino-acid chain; its full sequence is Ubiquitin carboxyl-terminal hydrolase 20 (913 aa).

The UBP-type zinc finger occupies Asp6–Ser111. Cys8, His10, Cys30, Cys33, Cys43, Cys48, Cys53, His60, His64, His70, Cys83, and Cys86 together coordinate Zn(2+). Residues Ser111, Ser131, and Ser133 each carry the phosphoserine modification. Residues Thr144–Ser684 form the USP domain. The Nucleophile role is filled by Cys153. Positions Leu256–Val414 are disordered. Thr257 carries the phosphothreonine modification. A compositionally biased stretch (basic and acidic residues) spans Glu258–Ser278. Ser304 bears the Phosphoserine mark. Basic and acidic residues predominate over residues Glu315–Phe331. The residue at position 367 (Ser367) is a Phosphoserine. Thr376 is subject to Phosphothreonine. 2 positions are modified to phosphoserine: Ser407 and Ser412. The Proton acceptor role is filled by His642. 2 DUSP domains span residues Glu686–Cys779 and Ala788–Val891.

It belongs to the peptidase C19 family. USP20/USP33 subfamily. As to quaternary structure, interacts with VHL, leading to its ubiquitination and subsequent degradation. Interacts with CCP110. Interacts with DIO2. Interacts with HIF1A. Interacts with ADRB2. Interacts with USP18. Post-translationally, ubiquitinated via a VHL-dependent pathway for proteasomal degradation.

The protein resides in the cytoplasm. The protein localises to the endoplasmic reticulum. Its subcellular location is the perinuclear region. It is found in the cytoskeleton. It localises to the microtubule organizing center. The protein resides in the centrosome. The catalysed reaction is Thiol-dependent hydrolysis of ester, thioester, amide, peptide and isopeptide bonds formed by the C-terminal Gly of ubiquitin (a 76-residue protein attached to proteins as an intracellular targeting signal).. Its function is as follows. Deubiquitinating enzyme that plays a role in many cellular processes including autophagy, cellular antiviral response or membrane protein biogenesis. Attenuates TLR4-mediated NF-kappa-B signaling by cooperating with beta-arrestin-2/ARRB2 and inhibiting TRAF6 autoubiquitination. Promotes cellular antiviral responses by deconjugating 'Lys-33' and 'Lys-48'-linked ubiquitination of STING1 leading to its stabilization. Plays an essential role in autophagy induction by regulating the ULK1 stability through deubiquitination of ULK1. Acts as a positive regulator for NF-kappa-B activation by TNF-alpha through deubiquitinating 'Lys-48'-linked polyubiquitination of SQSTM1, leading to its increased stability. Acts as a regulator of G-protein coupled receptor (GPCR) signaling by mediating the deubiquitination beta-2 adrenergic receptor (ADRB2). Plays a central role in ADRB2 recycling and resensitization after prolonged agonist stimulation by constitutively binding ADRB2, mediating deubiquitination of ADRB2 and inhibiting lysosomal trafficking of ADRB2. Upon dissociation, it is probably transferred to the translocated beta-arrestins, possibly leading to beta-arrestins deubiquitination and disengagement from ADRB2. This suggests the existence of a dynamic exchange between the ADRB2 and beta-arrestins. Deubiquitinates DIO2, thereby regulating thyroid hormone regulation. Deubiquitinates HIF1A, leading to stabilize HIF1A and enhance HIF1A-mediated activity. Deubiquitinates MCL1, a pivotal member of the anti-apoptotic Bcl-2 protein family to regulate its stability. Within the endoplasmic reticulum, participates with USP33 in the rescue of post-translationally targeted membrane proteins that are inappropriately ubiquitinated by the cytosolic protein quality control in the cytosol. The chain is Ubiquitin carboxyl-terminal hydrolase 20 (USP20) from Pongo abelii (Sumatran orangutan).